The chain runs to 313 residues: Protein FixB (313 aa).

255–283 (LYLAVGISGQIQHMVGANASQTIFAINKD) contributes to the FAD binding site.

It belongs to the ETF alpha-subunit/FixB family. As to quaternary structure, heterodimer of FixA and FixB.

The protein operates within amine and polyamine metabolism; carnitine metabolism. Its function is as follows. Required for anaerobic carnitine reduction. May bring reductant to CaiA. The sequence is that of Protein FixB from Escherichia coli (strain 55989 / EAEC).